A 385-amino-acid chain; its full sequence is GTP cyclohydrolase 1 type 2 homolog (385 aa).

Histidine 64, histidine 65, aspartate 103, histidine 333, and glutamate 337 together coordinate a divalent metal cation.

Belongs to the GTP cyclohydrolase I type 2/NIF3 family. Homohexamer.

This chain is GTP cyclohydrolase 1 type 2 homolog, found in Mycobacterium leprae (strain TN).